A 449-amino-acid polypeptide reads, in one-letter code: UDP-N-acetylmuramoylalanine--D-glutamate ligase (449 aa).

119-125 (GTNGKTT) contributes to the ATP binding site.

It belongs to the MurCDEF family.

Its subcellular location is the cytoplasm. The enzyme catalyses UDP-N-acetyl-alpha-D-muramoyl-L-alanine + D-glutamate + ATP = UDP-N-acetyl-alpha-D-muramoyl-L-alanyl-D-glutamate + ADP + phosphate + H(+). The protein operates within cell wall biogenesis; peptidoglycan biosynthesis. Cell wall formation. Catalyzes the addition of glutamate to the nucleotide precursor UDP-N-acetylmuramoyl-L-alanine (UMA). This Lactococcus lactis subsp. cremoris (strain MG1363) protein is UDP-N-acetylmuramoylalanine--D-glutamate ligase.